Here is a 282-residue protein sequence, read N- to C-terminus: MASATVVSQIQSLYIIKPRLSPPPPPHRQFRSIYFPTTRLLQQHRFRQMKSVVIVPATAAETARKRYPGESKGFVEEMRFVAMKLHTKDQAKEGEKEVTEPEEKAVTKWEPTVDGYLKFLVDSKVVYDTLEKIVQDATHPSYAEFRNTGLERSASLAKDLEWFKEQGYTIPQPSSPGLNYAQYLRDLSQNDPQAFICHFYNIYFAHSAGGRMIGKKIAGELLNNKGLEFYKWDGDLSQLLQNVRDKLNKVAEQWTREEKNHCLEETEKSFKWSGEILRLILS.

The N-terminal 56 residues, 1 to 56 (MASATVVSQIQSLYIIKPRLSPPPPPHRQFRSIYFPTTRLLQQHRFRQMKSVVIVP), are a transit peptide targeting the chloroplast. Histidine 86 is a heme b binding site.

It belongs to the heme oxygenase family. Highly expressed in root nodules and, to a lower extent, in leaves, shoots, roots, flowers and pods (at protein level).

The protein localises to the plastid. It is found in the chloroplast. It carries out the reaction heme b + 3 reduced [NADPH--hemoprotein reductase] + 3 O2 = biliverdin IXalpha + CO + Fe(2+) + 3 oxidized [NADPH--hemoprotein reductase] + 3 H2O + H(+). In terms of biological role, key enzyme in the synthesis of the chromophore of the phytochrome family of plant photoreceptors. Catalyzes the opening of the heme ring to form the open-chain tetrapyrrole biliverdin IX with the release of iron and carbon monoxide (CO). Produces specifically the biliverdin IX-alpha isomer. Can form complex with heme, is ferredoxin-dependent and its activity is increased in the presence of ascorbate. May affect the plastid-to-nucleus signaling pathway by perturbing tetrapyrrole synthesis. The plastid-to-nucleus signal plays an important role in the coordinated expression of both nuclear- and chloroplast-localized genes that encode photosynthesis-related proteins. Required for efficient symbiotic nitrogen fixation (SNF) in root nodules. Responsible for heme catabolism in uninfected nodule interstitial cells (UC), preventing superoxide production under stressful conditions (e.g. nitrate exposure and darkness) and catalyzing biliverdin (BV) production in senescing green nodules. The protein is Heme oxygenase 1, chloroplastic of Lotus japonicus (Lotus corniculatus var. japonicus).